We begin with the raw amino-acid sequence, 203 residues long: Imidazoleglycerol-phosphate dehydratase (203 aa).

It belongs to the imidazoleglycerol-phosphate dehydratase family.

It localises to the cytoplasm. It carries out the reaction D-erythro-1-(imidazol-4-yl)glycerol 3-phosphate = 3-(imidazol-4-yl)-2-oxopropyl phosphate + H2O. Its pathway is amino-acid biosynthesis; L-histidine biosynthesis; L-histidine from 5-phospho-alpha-D-ribose 1-diphosphate: step 6/9. In Salinispora arenicola (strain CNS-205), this protein is Imidazoleglycerol-phosphate dehydratase.